The following is a 338-amino-acid chain: Ketol-acid reductoisomerase (NADP(+)) (338 aa).

Residues 1 to 181 (MKVFYDKDCD…GGGRAGIIET (181 aa)) enclose the KARI N-terminal Rossmann domain. NADP(+) contacts are provided by residues 24-27 (YGSQ), arginine 47, and serine 52. Residue histidine 107 is part of the active site. Glycine 133 is an NADP(+) binding site. The 146-residue stretch at 182–327 (NFREETETDL…GKLRAMMPWI (146 aa)) folds into the KARI C-terminal knotted domain. 4 residues coordinate Mg(2+): aspartate 190, glutamate 194, glutamate 226, and glutamate 230. Serine 251 contacts substrate.

Belongs to the ketol-acid reductoisomerase family. Mg(2+) serves as cofactor.

It carries out the reaction (2R)-2,3-dihydroxy-3-methylbutanoate + NADP(+) = (2S)-2-acetolactate + NADPH + H(+). It catalyses the reaction (2R,3R)-2,3-dihydroxy-3-methylpentanoate + NADP(+) = (S)-2-ethyl-2-hydroxy-3-oxobutanoate + NADPH + H(+). The protein operates within amino-acid biosynthesis; L-isoleucine biosynthesis; L-isoleucine from 2-oxobutanoate: step 2/4. Its pathway is amino-acid biosynthesis; L-valine biosynthesis; L-valine from pyruvate: step 2/4. In terms of biological role, involved in the biosynthesis of branched-chain amino acids (BCAA). Catalyzes an alkyl-migration followed by a ketol-acid reduction of (S)-2-acetolactate (S2AL) to yield (R)-2,3-dihydroxy-isovalerate. In the isomerase reaction, S2AL is rearranged via a Mg-dependent methyl migration to produce 3-hydroxy-3-methyl-2-ketobutyrate (HMKB). In the reductase reaction, this 2-ketoacid undergoes a metal-dependent reduction by NADPH to yield (R)-2,3-dihydroxy-isovalerate. This is Ketol-acid reductoisomerase (NADP(+)) from Bordetella pertussis (strain Tohama I / ATCC BAA-589 / NCTC 13251).